Reading from the N-terminus, the 263-residue chain is Endonuclease 8 (263 aa).

Pro2 serves as the catalytic Schiff-base intermediate with DNA. Glu3 serves as the catalytic Proton donor. Lys53 functions as the Proton donor; for beta-elimination activity in the catalytic mechanism. Residues Gln70, Arg125, and Asn169 each coordinate DNA. Residues 229-263 (KVFHRDGEPCERCGSIIEKTTLSSRPFYWCPGCQH) form an FPG-type zinc finger. Residue Arg253 is the Proton donor; for delta-elimination activity of the active site.

The protein belongs to the FPG family. Requires Zn(2+) as cofactor.

The enzyme catalyses 2'-deoxyribonucleotide-(2'-deoxyribose 5'-phosphate)-2'-deoxyribonucleotide-DNA = a 3'-end 2'-deoxyribonucleotide-(2,3-dehydro-2,3-deoxyribose 5'-phosphate)-DNA + a 5'-end 5'-phospho-2'-deoxyribonucleoside-DNA + H(+). Its function is as follows. Involved in base excision repair of DNA damaged by oxidation or by mutagenic agents. Acts as a DNA glycosylase that recognizes and removes damaged bases. Has a preference for oxidized pyrimidines, such as thymine glycol, 5,6-dihydrouracil and 5,6-dihydrothymine. Has AP (apurinic/apyrimidinic) lyase activity and introduces nicks in the DNA strand. Cleaves the DNA backbone by beta-delta elimination to generate a single-strand break at the site of the removed base with both 3'- and 5'-phosphates. This Escherichia coli O9:H4 (strain HS) protein is Endonuclease 8.